Consider the following 453-residue polypeptide: MLGKAEKRSEALAAEALAYMPGFGNDFETESLPGALPQGQNSPQKCNYGLYAEQLSGSPFTAPRGTNERSWLYRIRPSVRHTGRFAKIDYPHWKTAPHIAEHALALGQLRWNPLPEPTGELNFLQGIRTMTTAGDVLTQVGMAAHAYVFNADMVDDYFFNADGELLIVPEMGALQVFTELGKMDVAPSEICLVPRGTMFKVARLGEEKAWRGYICENYGAKFTLPDRGPIGANCLANPRDFKTPVAAFEDKETPCRVQVKWCGSFHTVEIGHSPLDVVAWHGNYAPYKYDLKTFSPVGAILFDHPDPSIFTVLTAPSGEEGTANVDFVLFPPRWLVAEHTFRPPWYHRNIMSEFMGLIHGRYDAKEEGFVPGGMSLHNMMLAHGPDTSGFEKATNGELKPVKLDNTMAFMFETRFPQQLTRFAAELETLQDDYIDCWAGLRKRFNGTPEGDWS.

Histidine 304 acts as the Proton acceptor in catalysis. Fe cation is bound by residues histidine 347 and glutamate 353. Residues tyrosine 362 and histidine 383 each contribute to the homogentisate site. Position 383 (histidine 383) interacts with Fe cation.

It belongs to the homogentisate dioxygenase family. As to quaternary structure, hexamer; dimer of trimers. It depends on Fe cation as a cofactor.

The enzyme catalyses homogentisate + O2 = 4-maleylacetoacetate + H(+). It functions in the pathway amino-acid degradation; L-phenylalanine degradation; acetoacetate and fumarate from L-phenylalanine: step 4/6. Its function is as follows. Involved in the catabolism of homogentisate (2,5-dihydroxyphenylacetate or 2,5-OH-PhAc), a central intermediate in the degradation of phenylalanine and tyrosine. Catalyzes the oxidative ring cleavage of the aromatic ring of homogentisate to yield maleylacetoacetate. This is Homogentisate 1,2-dioxygenase from Sinorhizobium fredii (strain NBRC 101917 / NGR234).